A 191-amino-acid chain; its full sequence is Ion-translocating oxidoreductase complex subunit B (191 aa).

Positions Met-1–Ala-26 are hydrophobic. Residues Glu-32–Val-90 form the 4Fe-4S domain. Residues Cys-49, Cys-52, Cys-57, Cys-73, Cys-116, Cys-119, Cys-122, Cys-126, Cys-146, Cys-149, Cys-152, and Cys-156 each coordinate [4Fe-4S] cluster. 2 4Fe-4S ferredoxin-type domains span residues Gln-107–Arg-136 and Ala-137–Val-166.

It belongs to the 4Fe4S bacterial-type ferredoxin family. RnfB subfamily. The complex is composed of six subunits: RnfA, RnfB, RnfC, RnfD, RnfE and RnfG. It depends on [4Fe-4S] cluster as a cofactor.

It is found in the cell inner membrane. Its function is as follows. Part of a membrane-bound complex that couples electron transfer with translocation of ions across the membrane. This is Ion-translocating oxidoreductase complex subunit B from Edwardsiella ictaluri (strain 93-146).